A 220-amino-acid chain; its full sequence is CRIB domain-containing protein RIC3 (220 aa).

Residues 28 to 41 enclose the CRIB domain; that stretch reads IGFPTDVKHVAHIG. The segment at 39 to 220 is disordered; sequence HIGSDGPATN…CNDNNISDKE (182 aa). Polar residues predominate over residues 61 to 77; it reads NENGQVVSRADANNNQI. Residues 108–121 show a composition bias toward low complexity; the sequence is NGSPPRRNSSASAS. Basic residues-rich tracts occupy residues 127-136 and 172-184; these read NTRRHHRSRH and HSRK…RKPK. Polar residues predominate over residues 209–220; that stretch reads DTCNDNNISDKE.

As to quaternary structure, interacts with ARAC11/ROP1. As to expression, expressed in flowers and pollen.

The protein localises to the cytoplasm. Its function is as follows. Functions as a downstream effector of Rho-related GTP binding proteins of the 'Rho of Plants' (ROPs) family. Participates in the propagation of ROP GTPase signals in specific cellular responses. Functions as a downstream effector of ARAC11/ROP1 to activate calcium signaling that leads to F-actin disassembly associated with exocytosis in the tip of the growing pollen tube. Counteracts the ARAC11/ROP1-RIC4 pathway, which promotes apical F-actin assembly associated with vesicle accumulation, to control actin dynamics and pollen tube apical growth. The polypeptide is CRIB domain-containing protein RIC3 (RIC3) (Arabidopsis thaliana (Mouse-ear cress)).